A 117-amino-acid chain; its full sequence is Ribonuclease P protein component (117 aa).

The protein belongs to the RnpA family. Consists of a catalytic RNA component (M1 or rnpB) and a protein subunit.

It carries out the reaction Endonucleolytic cleavage of RNA, removing 5'-extranucleotides from tRNA precursor.. Its function is as follows. RNaseP catalyzes the removal of the 5'-leader sequence from pre-tRNA to produce the mature 5'-terminus. It can also cleave other RNA substrates such as 4.5S RNA. The protein component plays an auxiliary but essential role in vivo by binding to the 5'-leader sequence and broadening the substrate specificity of the ribozyme. In Aliivibrio salmonicida (strain LFI1238) (Vibrio salmonicida (strain LFI1238)), this protein is Ribonuclease P protein component.